We begin with the raw amino-acid sequence, 670 residues long: Probable plastid-lipid-associated protein 14, chloroplastic (670 aa).

Residues 1-52 (MALCGVCSTPNLPNLQVFRSVRNSSIGYKRNHSLWQLRSSSFRAKSVIFHCS) constitute a chloroplast transit peptide. Positions 88 to 399 (FRILDRVSIG…CLDALKHPFL (312 aa)) constitute a Protein kinase domain.

The protein belongs to the PAP/fibrillin family. Post-translationally, not autophosphorylated. Expressed in roots.

Its subcellular location is the plastid. It localises to the chloroplast. In terms of biological role, directly regulated by DOF3.6/OBP3; unknown function. The chain is Probable plastid-lipid-associated protein 14, chloroplastic (PAP14) from Arabidopsis thaliana (Mouse-ear cress).